The chain runs to 99 residues: UPF0122 protein UU142 (99 aa).

Belongs to the UPF0122 family.

Its function is as follows. Might take part in the signal recognition particle (SRP) pathway. This is inferred from the conservation of its genetic proximity to ftsY/ffh. May be a regulatory protein. This Ureaplasma parvum serovar 3 (strain ATCC 700970) protein is UPF0122 protein UU142.